Consider the following 164-residue polypeptide: Cyclin-dependent kinase inhibitor 1 (164 aa).

Ser-2 is modified (N-acetylserine). Ser-2 is covalently cross-linked (Glycyl serine ester (Ser-Gly) (interchain with G-Cter in ubiquitin)). The segment at 13-41 (CGSKACRRLFGPVDSEQLSRDCDALMAGC) adopts a C4-type zinc-finger fold. The interval 17–24 (ACRRLFGP) is required for binding cyclins. Positions 53–58 (FVTETP) are required for binding CDKs. A disordered region spans residues 76–164 (LYLPTGPRRG…RRLIFSKRKP (89 aa)). Thr-80 is modified (phosphothreonine; by LKB1). Ser-114 is subject to Phosphoserine; by GSK3-beta. Ser-130 is subject to Phosphoserine. The short motif at 140–164 (RKRRQTSMTDFYHSKRRLIFSKRKP) is the PIP-box K+4 motif element. Positions 141–156 (KRRQTSMTDFYHSKRR) match the Nuclear localization signal motif. Thr-145 carries the phosphothreonine; by PKA, PKB/AKT1, PIM1 and PIM2 modification. At Ser-146 the chain carries Phosphoserine; by PKC and NUAK1. Residues 152-164 (HSKRRLIFSKRKP) are interaction with TRIM39. Residues 153-164 (SKRRLIFSKRKP) show a composition bias toward basic residues. At Ser-160 the chain carries Phosphoserine; by PKC; in vitro.

Belongs to the CDI family. In terms of assembly, interacts with HDAC1; the interaction is prevented by competitive binding of C10orf90/FATS to HDAC1 facilitating acetylation and protein stabilization of CDKN1A/p21. Interacts with MKRN1. Interacts with PSMA3. Interacts with PCNA. Component of the ternary complex, cyclin D-CDK4-CDKN1A. Interacts (via its N-terminal domain) with CDK4; the interaction promotes the assembly of the cyclin D-CDK4 complex, its nuclear translocation and promotes the cyclin D-dependent enzyme activity of CDK4. Binding to CDK2 leads to CDK2/cyclin E inactivation at the G1-S phase DNA damage checkpoint, thereby arresting cells at the G1-S transition during DNA repair. Interacts with PIM1. Interacts with STK11 and NUAK1. Interacts wih DTL. Interacts with isoform 1 and isoform 2 of TRIM39. Interacts with PKP3; the interaction sequesters CDKN1A to the cytoplasm thereby repressing its role as an inhibitor of CDK4- and CDK6-driven RB1 phosphorylation. In terms of processing, phosphorylation of Thr-145 by Akt or of Ser-146 by PKC impairs binding to PCNA. Phosphorylation at Ser-114 by GSK3-beta enhances ubiquitination by the DCX(DTL) complex. Phosphorylation of Thr-145 by PIM2 enhances CDKN1A stability and inhibits cell proliferation. Phosphorylation of Thr-145 by PIM1 results in the relocation of CDKN1A to the cytoplasm and enhanced CDKN1A protein stability. UV radiation-induced phosphorylation at Thr-80 by LKB1 and at Ser-146 by NUAK1 leads to its degradation. Ubiquitinated by MKRN1; leading to polyubiquitination and 26S proteasome-dependent degradation. Ubiquitinated by the DCX(DTL) complex, also named CRL4(CDT2) complex, leading to its degradation during S phase or following UV irradiation. Ubiquitination by the DCX(DTL) complex is essential to control replication licensing and is PCNA-dependent: interacts with PCNA via its PIP-box, while the presence of the containing the 'K+4' motif in the PIP box, recruit the DCX(DTL) complex, leading to its degradation. Ubiquitination at Ser-2 leads to degradation by the proteasome pathway. Ubiquitinated by RNF114; leading to proteasomal degradation. Post-translationally, acetylation leads to protein stability. Acetylated in vitro on Lys-141, Lys-154, Lys-161 and Lys-163. Deacetylation by HDAC1 is prevented by competitive binding of C10orf90/FATS to HDAC1. In terms of tissue distribution, expressed in all adult tissues, with 5-fold lower levels observed in the brain.

Its subcellular location is the cytoplasm. It localises to the nucleus. Its function is as follows. Plays an important role in controlling cell cycle progression and DNA damage-induced G2 arrest. Involved in p53/TP53 mediated inhibition of cellular proliferation in response to DNA damage. Also involved in p53-independent DNA damage-induced G2 arrest mediated by CREB3L1 in astrocytes and osteoblasts. Binds to and inhibits cyclin-dependent kinase activity, preventing phosphorylation of critical cyclin-dependent kinase substrates and blocking cell cycle progression. Functions in the nuclear localization and assembly of cyclin D-CDK4 complex and promotes its kinase activity towards RB1. At higher stoichiometric ratios, inhibits the kinase activity of the cyclin D-CDK4 complex. Inhibits DNA synthesis by DNA polymerase delta by competing with POLD3 for PCNA binding. Negatively regulates the CDK4- and CDK6-driven phosphorylation of RB1 in keratinocytes, thereby resulting in the release of E2F1 and subsequent transcription of E2F1-driven G1/S phase promoting genes. This chain is Cyclin-dependent kinase inhibitor 1, found in Homo sapiens (Human).